The sequence spans 147 residues: Prefoldin subunit alpha (147 aa).

Belongs to the prefoldin alpha subunit family. In terms of assembly, heterohexamer of two alpha and four beta subunits.

Its subcellular location is the cytoplasm. Molecular chaperone capable of stabilizing a range of proteins. Seems to fulfill an ATP-independent, HSP70-like function in archaeal de novo protein folding. In Methanocorpusculum labreanum (strain ATCC 43576 / DSM 4855 / Z), this protein is Prefoldin subunit alpha.